A 299-amino-acid polypeptide reads, in one-letter code: Oxygen-dependent coproporphyrinogen-III oxidase (299 aa).

Residue Ser92 coordinates substrate. 2 residues coordinate a divalent metal cation: His96 and His106. The active-site Proton donor is the His106. 108–110 contributes to the substrate binding site; that stretch reads NVR. A divalent metal cation is bound by residues His145 and His175. An important for dimerization region spans residues 240–275; the sequence is YVEFNLVWDRGTLFGLQTGGRTESILMSMPPLVRWE. 258–260 provides a ligand contact to substrate; it reads GGR.

The protein belongs to the aerobic coproporphyrinogen-III oxidase family. Homodimer. A divalent metal cation serves as cofactor.

It localises to the cytoplasm. The enzyme catalyses coproporphyrinogen III + O2 + 2 H(+) = protoporphyrinogen IX + 2 CO2 + 2 H2O. It functions in the pathway porphyrin-containing compound metabolism; protoporphyrin-IX biosynthesis; protoporphyrinogen-IX from coproporphyrinogen-III (O2 route): step 1/1. Functionally, involved in the heme biosynthesis. Catalyzes the aerobic oxidative decarboxylation of propionate groups of rings A and B of coproporphyrinogen-III to yield the vinyl groups in protoporphyrinogen-IX. In Shigella boydii serotype 18 (strain CDC 3083-94 / BS512), this protein is Oxygen-dependent coproporphyrinogen-III oxidase.